Here is a 254-residue protein sequence, read N- to C-terminus: MLKIADVEFESRLFTGTGKFSNSQVMIEAIMASKSQLVTVAMKRIDFKMGLDDLLTPLRQAGVRLLPNTSGARNAKEAVFAAELAREMLGTHWIKLEIHPDPKYLMPDAIETLEAARILCEKGFIVLPYVHADPVLCRRLEEVGCAAVMPLASPIGSNQGLVTESFLKIIIEQARVPVVIDAGIGAPSQAARAMELGADAVLVNTAIASSASPIVMAECFKEAVQCGRRAFEAGLGRVQTGAVQTSPLTGFLNQ.

The Schiff-base intermediate with DXP role is filled by K95. 1-deoxy-D-xylulose 5-phosphate-binding positions include G156, A182 to G183, and N204 to T205.

This sequence belongs to the ThiG family. Homotetramer. Forms heterodimers with either ThiH or ThiS.

The protein resides in the cytoplasm. It catalyses the reaction [ThiS sulfur-carrier protein]-C-terminal-Gly-aminoethanethioate + 2-iminoacetate + 1-deoxy-D-xylulose 5-phosphate = [ThiS sulfur-carrier protein]-C-terminal Gly-Gly + 2-[(2R,5Z)-2-carboxy-4-methylthiazol-5(2H)-ylidene]ethyl phosphate + 2 H2O + H(+). It participates in cofactor biosynthesis; thiamine diphosphate biosynthesis. Functionally, catalyzes the rearrangement of 1-deoxy-D-xylulose 5-phosphate (DXP) to produce the thiazole phosphate moiety of thiamine. Sulfur is provided by the thiocarboxylate moiety of the carrier protein ThiS. In vitro, sulfur can be provided by H(2)S. This chain is Thiazole synthase, found in Shewanella putrefaciens (strain CN-32 / ATCC BAA-453).